A 275-amino-acid polypeptide reads, in one-letter code: 3-methyl-2-oxobutanoate hydroxymethyltransferase (275 aa).

Aspartate 44 and aspartate 83 together coordinate Mg(2+). 3-methyl-2-oxobutanoate is bound by residues aspartate 44–serine 45, aspartate 83, and lysine 113. Glutamate 115 contributes to the Mg(2+) binding site. Catalysis depends on glutamate 182, which acts as the Proton acceptor.

Belongs to the PanB family. Homodecamer; pentamer of dimers. Mg(2+) is required as a cofactor.

The protein resides in the cytoplasm. It catalyses the reaction 3-methyl-2-oxobutanoate + (6R)-5,10-methylene-5,6,7,8-tetrahydrofolate + H2O = 2-dehydropantoate + (6S)-5,6,7,8-tetrahydrofolate. The protein operates within cofactor biosynthesis; (R)-pantothenate biosynthesis; (R)-pantoate from 3-methyl-2-oxobutanoate: step 1/2. Catalyzes the reversible reaction in which hydroxymethyl group from 5,10-methylenetetrahydrofolate is transferred onto alpha-ketoisovalerate to form ketopantoate. This chain is 3-methyl-2-oxobutanoate hydroxymethyltransferase, found in Clostridium botulinum (strain Loch Maree / Type A3).